The chain runs to 54 residues: Lectin alpha-1 chain (54 aa).

The protein belongs to the leguminous lectin family. In terms of assembly, tetramer of two alpha and two beta chains.

The protein is Lectin alpha-1 chain of Lathyrus cicera (Flat-pod pea).